We begin with the raw amino-acid sequence, 235 residues long: Phosphoglycolate phosphatase (235 aa).

Asp-14 functions as the Nucleophile in the catalytic mechanism. Positions 14, 16, and 177 each coordinate Mg(2+).

The protein belongs to the HAD-like hydrolase superfamily. CbbY/CbbZ/Gph/YieH family. Mg(2+) serves as cofactor.

It catalyses the reaction 2-phosphoglycolate + H2O = glycolate + phosphate. It functions in the pathway organic acid metabolism; glycolate biosynthesis; glycolate from 2-phosphoglycolate: step 1/1. Specifically catalyzes the dephosphorylation of 2-phosphoglycolate. Is involved in the dissimilation of the intracellular 2-phosphoglycolate formed during the DNA repair of 3'-phosphoglycolate ends, a major class of DNA lesions induced by oxidative stress. The protein is Phosphoglycolate phosphatase of Neisseria meningitidis serogroup A / serotype 4A (strain DSM 15465 / Z2491).